Consider the following 167-residue polypeptide: Leptin (167 aa).

Positions 1–21 (MRCGPLCRFLWLWPYLSYIEA) are cleaved as a signal peptide. Residues Cys117 and Cys167 are joined by a disulfide bond.

The protein belongs to the leptin family.

The protein localises to the secreted. Key player in the regulation of energy balance and body weight control. Once released into the circulation, has central and peripheral effects by binding LEPR, found in many tissues, which results in the activation of several major signaling pathways. In the hypothalamus, acts as an appetite-regulating factor that induces a decrease in food intake and an increase in energy consumption by inducing anorexinogenic factors and suppressing orexigenic neuropeptides, also regulates bone mass and secretion of hypothalamo-pituitary-adrenal hormones. In the periphery, increases basal metabolism, influences reproductive function, regulates pancreatic beta-cell function and insulin secretion, is pro-angiogenic for endothelial cell and affects innate and adaptive immunity. In the arcuate nucleus of the hypothalamus, activates by depolarization POMC neurons inducing FOS and SOCS3 expression to release anorexigenic peptides and inhibits by hyperpolarization NPY neurons inducing SOCS3 with a consequent reduction on release of orexigenic peptides. In addition to its known satiety inducing effect, has a modulatory role in nutrient absorption. In the intestine, reduces glucose absorption by enterocytes by activating PKC and leading to a sequential activation of p38, PI3K and ERK signaling pathways which exerts an inhibitory effect on glucose absorption. Acts as a growth factor on certain tissues, through the activation of different signaling pathways increases expression of genes involved in cell cycle regulation such as CCND1, via JAK2-STAT3 pathway, or VEGFA, via MAPK1/3 and PI3K-AKT1 pathways. May also play an apoptotic role via JAK2-STAT3 pathway and up-regulation of BIRC5 expression. Pro-angiogenic, has mitogenic activity on vascular endothelial cells and plays a role in matrix remodeling by regulating the expression of matrix metalloproteinases (MMPs) and tissue inhibitors of metalloproteinases (TIMPs). In innate immunity, modulates the activity and function of neutrophils by increasing chemotaxis and the secretion of oxygen radicals. Increases phagocytosis by macrophages and enhances secretion of pro-inflammatory mediators. Increases cytotoxic ability of NK cells. Plays a pro-inflammatory role, in synergy with IL1B, by inducing NOS2 which promotes the production of IL6, IL8 and Prostaglandin E2, through a signaling pathway that involves JAK2, PI3K, MAP2K1/MEK1 and MAPK14/p38. In adaptive immunity, promotes the switch of memory T-cells towards T helper-1 cell immune responses. Increases CD4(+)CD25(-) T-cell proliferation and reduces autophagy during TCR (T-cell receptor) stimulation, through MTOR signaling pathway activation and BCL2 up-regulation. In Ursus thibetanus (Asiatic black bear), this protein is Leptin (LEP).